The following is a 145-amino-acid chain: 3-dehydroquinate dehydratase (145 aa).

Tyr-23 functions as the Proton acceptor in the catalytic mechanism. Residues Asn-75, His-81, and Asp-88 each coordinate substrate. The active-site Proton donor is His-101. Residues 102-103 and Arg-112 contribute to the substrate site; that span reads LS.

It belongs to the type-II 3-dehydroquinase family. As to quaternary structure, homododecamer.

The catalysed reaction is 3-dehydroquinate = 3-dehydroshikimate + H2O. It functions in the pathway metabolic intermediate biosynthesis; chorismate biosynthesis; chorismate from D-erythrose 4-phosphate and phosphoenolpyruvate: step 3/7. Catalyzes a trans-dehydration via an enolate intermediate. This chain is 3-dehydroquinate dehydratase, found in Legionella pneumophila (strain Lens).